A 217-amino-acid chain; its full sequence is Kunitz-type trypsin inhibitor-like 1 protein (217 aa).

An N-terminal signal peptide occupies residues 1 to 26; that stretch reads MKPLSPLTLSFFLFVFITNLSLAFSN. 2 disulfides stabilise this stretch: Cys-70–Cys-115 and Cys-168–Cys-175. An N-linked (GlcNAc...) asparagine glycan is attached at Asn-191.

It belongs to the protease inhibitor I3 (leguminous Kunitz-type inhibitor) family. In terms of tissue distribution, expressed in roots, leaves, epidermal layers of elongating stems, meristems and in the vascular system.

The protein resides in the secreted. Functionally, might act as a protease inhibitor involved in plant defense responses. The sequence is that of Kunitz-type trypsin inhibitor-like 1 protein (PIP20-1) from Pisum sativum (Garden pea).